The chain runs to 338 residues: 1-aminocyclopropane-1-carboxylate deaminase (338 aa).

An N6-(pyridoxal phosphate)lysine modification is found at K51. The Nucleophile role is filled by S78.

The protein belongs to the ACC deaminase/D-cysteine desulfhydrase family. Homotrimer. The cofactor is pyridoxal 5'-phosphate.

It carries out the reaction 1-aminocyclopropane-1-carboxylate + H2O = 2-oxobutanoate + NH4(+). Catalyzes a cyclopropane ring-opening reaction, the irreversible conversion of 1-aminocyclopropane-1-carboxylate (ACC) to ammonia and alpha-ketobutyrate. Allows growth on ACC as a nitrogen source. This Burkholderia cenocepacia (strain HI2424) protein is 1-aminocyclopropane-1-carboxylate deaminase.